The following is a 390-amino-acid chain: Protein dom34 (390 aa).

This sequence belongs to the eukaryotic release factor 1 family. Pelota subfamily. Component of the Dom34-Hbs1 complex, also named Pelota-HBS1L complex, composed of dom34 and hbs1. A divalent metal cation is required as a cofactor.

Its subcellular location is the cytoplasm. Component of the Dom34-Hbs1 complex, a complex that recognizes stalled ribosomes and triggers the No-Go Decay (NGD) pathway. In the Dom34-Hbs1 complex, dom34 recognizes ribosomes stalled at the 3' end of an mRNA and engages stalled ribosomes by destabilizing mRNA in the mRNA channel. Following ribosome-binding, the Dom34-Hbs1 complex promotes the disassembly of stalled ribosomes, followed by degradation of damaged mRNAs as part of the NGD pathway. The sequence is that of Protein dom34 from Schizosaccharomyces pombe (strain 972 / ATCC 24843) (Fission yeast).